The following is a 440-amino-acid chain: Chromosomal replication initiator protein DnaA (440 aa).

The segment at 1–69 (MKERILQEIK…VKVVLGNDAT (69 aa)) is domain I, interacts with DnaA modulators. A domain II region spans residues 69–96 (TFEITYEAFEPHSSYSEPLVKKRAVLLT). The segment at 97–313 (PLNPDYTFEN…GAIIKLLVYK (217 aa)) is domain III, AAA+ region. Residues Gly-140, Gly-142, Lys-143, and Thr-144 each coordinate ATP. Positions 314–440 (ETTGKEVDLR…GEISKRALSG (127 aa)) are domain IV, binds dsDNA.

This sequence belongs to the DnaA family. As to quaternary structure, oligomerizes as a right-handed, spiral filament on DNA at oriC.

The protein resides in the cytoplasm. Its function is as follows. Plays an essential role in the initiation and regulation of chromosomal replication. ATP-DnaA binds to the origin of replication (oriC) to initiate formation of the DNA replication initiation complex once per cell cycle. Binds the DnaA box (a 9 base pair repeat at the origin) and separates the double-stranded (ds)DNA. Forms a right-handed helical filament on oriC DNA; dsDNA binds to the exterior of the filament while single-stranded (ss)DNA is stabiized in the filament's interior. The ATP-DnaA-oriC complex binds and stabilizes one strand of the AT-rich DNA unwinding element (DUE), permitting loading of DNA polymerase. After initiation quickly degrades to an ADP-DnaA complex that is not apt for DNA replication. Binds acidic phospholipids. The protein is Chromosomal replication initiator protein DnaA of Thermotoga petrophila (strain ATCC BAA-488 / DSM 13995 / JCM 10881 / RKU-1).